The chain runs to 242 residues: Probable transcriptional regulatory protein NGK_1508 (242 aa).

The protein belongs to the TACO1 family.

It localises to the cytoplasm. The sequence is that of Probable transcriptional regulatory protein NGK_1508 from Neisseria gonorrhoeae (strain NCCP11945).